The chain runs to 74 residues: Exodeoxyribonuclease 7 small subunit (74 aa).

It belongs to the XseB family. Heterooligomer composed of large and small subunits.

The protein resides in the cytoplasm. The catalysed reaction is Exonucleolytic cleavage in either 5'- to 3'- or 3'- to 5'-direction to yield nucleoside 5'-phosphates.. In terms of biological role, bidirectionally degrades single-stranded DNA into large acid-insoluble oligonucleotides, which are then degraded further into small acid-soluble oligonucleotides. The protein is Exodeoxyribonuclease 7 small subunit of Ruthia magnifica subsp. Calyptogena magnifica.